Consider the following 501-residue polypeptide: MFNYVIILPLALFLLAYKFFFTSKKQRYYLPPSPSYSLPILGHHLLIKPPVHRLFHRLSNIHGPIFYLRLGSRRAVVISSSSLARECFTGQNDVIVSNRPRFLTSKYIAYNYTTIATTSYGDHWRNLRRICSLEIVSSKRLANFLHIRKEEIQRMLTRLSRDARVGKEVELESILYDLTFNNIVRMVTGKIYYGDDVSDKEEAELFKKLFTFITTNSGARHPGEYLPFMKIFGGSFEKEVKAAAKVIDEMLQRLLDECKSDKDGNTMVNHLLSLQQDDPEYYTDIIIKGLMLGIMVASSETSALTIEWAMASLLNHPKVLDKVKLEIDEIIGQDRLIEESDIANLPYLQNVVSETLRLHPAAPVLVPRSTAEDIKIGGYDVPRDTMVMVNAWAIHRDPDLWTEPERFNPERFNGGEGEKDDVRMLIAFGSGRRICPGVGLAHKIVTLALGSLIQCFDWKKVNEKEIDMSEGPGMAMRMMVPLRALCKTRPIMNKLPAYTKV.

A Glycyl lysine isopeptide (Lys-Gly) (interchain with G-Cter in ubiquitin) cross-link involves residue Lys-245. Residues 285–305 traverse the membrane as a helical segment; it reads IIIKGLMLGIMVASSETSALT. Cys-435 contributes to the heme binding site.

The protein belongs to the cytochrome P450 family. Requires heme as cofactor.

The protein localises to the membrane. Its pathway is secondary metabolite biosynthesis. In terms of biological role, involved in indole glucosinolate biosynthesis. Catalyzes hydroxylation reactions of the glucosinolate indole ring. Converts indol-3-yl-methylglucosinolate (I3M) to 1-hydroxy-indol-3-yl-methylglucosinolate (1OH-I3M) intermediate. This hydroxy intermediates is converted to 1-methoxy-indol-3-yl-methylglucosinolate (1MO-I3M) by indole glucosinolate methyltransferase 1 and 2 (IGMT1 and IGMT2). This Arabidopsis thaliana (Mouse-ear cress) protein is Cytochrome P450 81F4.